Consider the following 344-residue polypeptide: Phenylalanine--tRNA ligase alpha subunit (344 aa).

Glu-269 is a binding site for Mg(2+).

It belongs to the class-II aminoacyl-tRNA synthetase family. Phe-tRNA synthetase alpha subunit type 1 subfamily. As to quaternary structure, tetramer of two alpha and two beta subunits. It depends on Mg(2+) as a cofactor.

Its subcellular location is the cytoplasm. It carries out the reaction tRNA(Phe) + L-phenylalanine + ATP = L-phenylalanyl-tRNA(Phe) + AMP + diphosphate + H(+). The polypeptide is Phenylalanine--tRNA ligase alpha subunit (Ralstonia nicotianae (strain ATCC BAA-1114 / GMI1000) (Ralstonia solanacearum)).